The primary structure comprises 396 residues: NADH-quinone oxidoreductase subunit D 2 (396 aa).

It belongs to the complex I 49 kDa subunit family. As to quaternary structure, NDH-1 is composed of 14 different subunits. Subunits NuoB, C, D, E, F, and G constitute the peripheral sector of the complex.

The protein localises to the cell inner membrane. It catalyses the reaction a quinone + NADH + 5 H(+)(in) = a quinol + NAD(+) + 4 H(+)(out). Its function is as follows. NDH-1 shuttles electrons from NADH, via FMN and iron-sulfur (Fe-S) centers, to quinones in the respiratory chain. The immediate electron acceptor for the enzyme in this species is believed to be ubiquinone. Couples the redox reaction to proton translocation (for every two electrons transferred, four hydrogen ions are translocated across the cytoplasmic membrane), and thus conserves the redox energy in a proton gradient. The sequence is that of NADH-quinone oxidoreductase subunit D 2 from Beijerinckia indica subsp. indica (strain ATCC 9039 / DSM 1715 / NCIMB 8712).